The chain runs to 386 residues: Chorismate synthase (386 aa).

Residues Leu-32–Arg-60 form a disordered region. Residues Asp-38–Arg-47 are compositionally biased toward basic and acidic residues. Arg-46 is a binding site for NADP(+). FMN is bound by residues Arg-123–Ser-125, Gly-290, Lys-305–Ser-309, and Arg-332.

Belongs to the chorismate synthase family. FMNH2 serves as cofactor.

It carries out the reaction 5-O-(1-carboxyvinyl)-3-phosphoshikimate = chorismate + phosphate. Its pathway is metabolic intermediate biosynthesis; chorismate biosynthesis; chorismate from D-erythrose 4-phosphate and phosphoenolpyruvate: step 7/7. Its function is as follows. Catalyzes the anti-1,4-elimination of the C-3 phosphate and the C-6 proR hydrogen from 5-enolpyruvylshikimate-3-phosphate (EPSP) to yield chorismate, which is the branch point compound that serves as the starting substrate for the three terminal pathways of aromatic amino acid biosynthesis. This reaction introduces a second double bond into the aromatic ring system. The sequence is that of Chorismate synthase from Methanopyrus kandleri (strain AV19 / DSM 6324 / JCM 9639 / NBRC 100938).